Reading from the N-terminus, the 265-residue chain is Cytochrome c oxidase subunit 3 (265 aa).

The next 6 helical transmembrane spans lie at 16–36 (PWPI…VMYM), 41–61 (GGAT…FVWW), 84–104 (YGSI…FWAS), 162–182 (AVYA…FQGM), 200–220 (FLLA…FLIV), and 242–262 (AWYW…IYWW).

The protein belongs to the cytochrome c oxidase subunit 3 family. In terms of assembly, component of the cytochrome c oxidase (complex IV, CIV), a multisubunit enzyme composed of a catalytic core of 3 subunits and several supernumerary subunits. The complex exists as a monomer or a dimer and forms supercomplexes (SCs) in the inner mitochondrial membrane with ubiquinol-cytochrome c oxidoreductase (cytochrome b-c1 complex, complex III, CIII).

Its subcellular location is the mitochondrion inner membrane. The catalysed reaction is 4 Fe(II)-[cytochrome c] + O2 + 8 H(+)(in) = 4 Fe(III)-[cytochrome c] + 2 H2O + 4 H(+)(out). Functionally, component of the cytochrome c oxidase, the last enzyme in the mitochondrial electron transport chain which drives oxidative phosphorylation. The respiratory chain contains 3 multisubunit complexes succinate dehydrogenase (complex II, CII), ubiquinol-cytochrome c oxidoreductase (cytochrome b-c1 complex, complex III, CIII) and cytochrome c oxidase (complex IV, CIV), that cooperate to transfer electrons derived from NADH and succinate to molecular oxygen, creating an electrochemical gradient over the inner membrane that drives transmembrane transport and the ATP synthase. Cytochrome c oxidase is the component of the respiratory chain that catalyzes the reduction of oxygen to water. Electrons originating from reduced cytochrome c in the intermembrane space (IMS) are transferred via the dinuclear copper A center (CU(A)) of subunit 2 and heme A of subunit 1 to the active site in subunit 1, a binuclear center (BNC) formed by heme A3 and copper B (CU(B)). The BNC reduces molecular oxygen to 2 water molecules using 4 electrons from cytochrome c in the IMS and 4 protons from the mitochondrial matrix. This chain is Cytochrome c oxidase subunit 3 (COX3), found in Zea mays (Maize).